The sequence spans 506 residues: Exoglucanase (506 aa).

The signal sequence occupies residues 1–18 (MFPRSILLALSLTAVALG). The catalytic stretch occupies residues 19–450 (QQVGTNMAEN…IKFGDINSTF (432 aa)). Glu-227 serves as the catalytic Nucleophile. Catalysis depends on Glu-232, which acts as the Proton donor. N-linked (GlcNAc...) asparagine glycosylation is present at Asn-308. The interval 405–426 (ASPSQPGISRGTCSRDSGKPED) is disordered. Residues 406-419 (SPSQPGISRGTCSR) are compositionally biased toward polar residues. An N-linked (GlcNAc...) asparagine glycan is attached at Asn-447. The disordered stretch occupies residues 449–472 (TFNNNGGGGGNPSPTTTRPNSPAQ). The segment at 451 to 473 (NNNGGGGGNPSPTTTRPNSPAQT) is linker. The segment covering 460–470 (PSPTTTRPNSP) has biased composition (low complexity). In terms of domain architecture, CBM1 spans 470–506 (PAQTMWGQCGGQGWTGPTACQSPSTCHVINDFYSQCF). 2 disulfide bridges follow: Cys-478-Cys-495 and Cys-489-Cys-505.

Belongs to the glycosyl hydrolase 7 (cellulase C) family.

The enzyme catalyses Hydrolysis of (1-&gt;4)-beta-D-glucosidic linkages in cellulose and cellotetraose, releasing cellobiose from the non-reducing ends of the chains.. The biological conversion of cellulose to glucose generally requires three types of hydrolytic enzymes: (1) Endoglucanases which cut internal beta-1,4-glucosidic bonds; (2) Exocellobiohydrolases that cut the disaccharide cellobiose from the non-reducing end of the cellulose polymer chain; (3) Beta-1,4-glucosidases which hydrolyze the cellobiose and other short cello-oligosaccharides to glucose. In Agaricus bisporus (White button mushroom), this protein is Exoglucanase (cel2).